A 1058-amino-acid chain; its full sequence is Kinesin-like protein KIN-5D (1058 aa).

Residues methionine 1 to lysine 43 form a disordered region. The segment covering serine 22–serine 32 has biased composition (basic and acidic residues). The region spanning asparagine 48–isoleucine 390 is the Kinesin motor domain. Position 134–141 (glycine 134–threonine 141) interacts with ATP. The stretch at glutamine 438–glutamate 517 forms a coiled coil.

The protein belongs to the TRAFAC class myosin-kinesin ATPase superfamily. Kinesin family. KIN-5/BimC subfamily.

The protein resides in the cytoplasm. Its subcellular location is the cytoskeleton. The protein localises to the spindle. Responsible for microtubule translocation. May be important for the organization of phragmoplast-specific arrays of microtubules. Plays an essential role in stabilizing the mitotic spindle. Required during mitotic cytokinesis. The chain is Kinesin-like protein KIN-5D from Arabidopsis thaliana (Mouse-ear cress).